The following is a 136-amino-acid chain: MLQPKRTKFRKVHKGRNRGLAQGTDVSFGTFGLKAVGRGRLTARQIEAARRAMTRAVKRQGKIWIRVFPDKPITEKPLEVRMGKGKGNVEYWVALIQPGKVLYEMDGVPEELAREAFGLAAAKLPIKTTFVTKTVM.

It belongs to the universal ribosomal protein uL16 family. Part of the 50S ribosomal subunit.

Its function is as follows. Binds 23S rRNA and is also seen to make contacts with the A and possibly P site tRNAs. This is Large ribosomal subunit protein uL16 from Enterobacter sp. (strain 638).